A 334-amino-acid polypeptide reads, in one-letter code: Putative violet-sensitive opsin (334 aa).

The Extracellular segment spans residues 1 to 29; the sequence is MGKYFYLYENISKVGPYDGPQYYLAPTWA. Residue Asn10 is glycosylated (N-linked (GlcNAc...) asparagine). A helical transmembrane segment spans residues 30 to 54; that stretch reads FYLQAAFMGFVFFVGTPLNFVVLLA. The Cytoplasmic portion of the chain corresponds to 55–66; sequence TAKYKKLRVPLN. A helical transmembrane segment spans residues 67–88; it reads YILVNITFAGFIFVTFSVSQVF. Over 89–106 the chain is Extracellular; the sequence is LASVRGYYFFGQTLCALE. Residues Cys103 and Cys179 are joined by a disulfide bond. A helical membrane pass occupies residues 107–126; the sequence is AAVGAVAGLVTSWSLAVLSF. Residues 127–145 lie on the Cytoplasmic side of the membrane; that stretch reads ERYLVICKPFGAFKFGSNH. The helical transmembrane segment at 146 to 168 threads the bilayer; that stretch reads ALAAVIFTWFMGVVRCPPFFGWS. At 169 to 194 the chain is on the extracellular side; sequence RYIPEGLGCSCGPDWYTNCEEFSCAS. The helical transmembrane segment at 195–222 threads the bilayer; the sequence is YSKFLLVTCFICPITIIIFSYSQLLGAL. Residues 223-244 lie on the Cytoplasmic side of the membrane; that stretch reads RAVAAQQAESASTQKAEKEVSR. A helical transmembrane segment spans residues 245-272; that stretch reads MIIVMVASFVTCYGPYALTAQYYAYSQD. Topologically, residues 273–279 are extracellular; that stretch reads ENKDYRL. Residues 280-301 form a helical membrane-spanning segment; that stretch reads VTIPAFFSKSSCVYNPLIYAFM. Lys288 carries the post-translational modification N6-(retinylidene)lysine. Residues 302-334 lie on the Cytoplasmic side of the membrane; sequence NKQFNGCIMEMVFGKKMEEASEVSSKTEVSTDS.

It belongs to the G-protein coupled receptor 1 family. Opsin subfamily. In terms of processing, phosphorylated on some or all of the serine and threonine residues present in the C-terminal region. The three color pigments are found in the cone photoreceptor cells.

Its subcellular location is the membrane. Visual pigments are the light-absorbing molecules that mediate vision. They consist of an apoprotein, opsin, covalently linked to cis-retinal. In Oryzias latipes (Japanese rice fish), this protein is Putative violet-sensitive opsin.